We begin with the raw amino-acid sequence, 129 residues long: Histone H2B.2 (129 aa).

Over residues methionine 1–proline 19 the composition is skewed to basic and acidic residues. The interval methionine 1 to lysine 37 is disordered. Residues lysine 7 and lysine 8 each carry the N6-acetyllysine; alternate modification. Glycyl lysine isopeptide (Lys-Gly) (interchain with G-Cter in SUMO); alternate cross-links involve residues lysine 7 and lysine 8. Serine 11 bears the Phosphoserine mark. Lysine 12 is subject to N6-acetyllysine. Lysine 17 carries the post-translational modification N6-acetyllysine; alternate. Lysine 17 participates in a covalent cross-link: Glycyl lysine isopeptide (Lys-Gly) (interchain with G-Cter in SUMO); alternate. A Glycyl lysine isopeptide (Lys-Gly) (interchain with G-Cter in SUMO) cross-link involves residue lysine 18. Lysine 123 participates in a covalent cross-link: Glycyl lysine isopeptide (Lys-Gly) (interchain with G-Cter in ubiquitin).

The protein belongs to the histone H2B family. In terms of assembly, the nucleosome is a histone octamer containing two molecules each of H2A, H2B, H3 and H4 assembled in one H3-H4 heterotetramer and two H2A-H2B heterodimers. The octamer wraps approximately 147 bp of DNA. Monoubiquitinated by the UBC2-BRE1 complex to form H2BK123ub1. H2BK123ub1 gives a specific tag for epigenetic transcriptional activation and is also prerequisite for H3K4me and H3K79me formation. H2BK123ub1 also modulates the formation of double-strand breaks during meiosis and is a prerequisite for DNA-damage checkpoint activation. Post-translationally, phosphorylated by STE20 to form H2BS10ph during progression through meiotic prophase. May be correlated with chromosome condensation. In terms of processing, acetylated by GCN5 to form H2BK11ac and H2BK16ac. H2BK16ac can also be formed by ESA1. Acetylation of N-terminal lysines and particularly formation of H2BK11acK16ac has a positive effect on transcription. Sumoylation to form H2BK6su or H2BK7su, and probably also H2BK16su or H2BK17su, occurs preferentially near the telomeres and represses gene transcription.

Its subcellular location is the nucleus. It is found in the chromosome. In terms of biological role, core component of nucleosome. Nucleosomes wrap and compact DNA into chromatin, limiting DNA accessibility to the cellular machineries which require DNA as a template. Histones thereby play a central role in transcription regulation, DNA repair, DNA replication and chromosomal stability. DNA accessibility is regulated via a complex set of post-translational modifications of histones, also called histone code, and nucleosome remodeling. This chain is Histone H2B.2 (HTB2), found in Meyerozyma guilliermondii (strain ATCC 6260 / CBS 566 / DSM 6381 / JCM 1539 / NBRC 10279 / NRRL Y-324) (Yeast).